The chain runs to 159 residues: Glucosamine 6-phosphate N-acetyltransferase (159 aa).

Residue serine 2 is modified to N-acetylserine. D-glucosamine 6-phosphate-binding positions include threonine 28, 86-89 (KIIH), and 98-100 (EDI). One can recognise an N-acetyltransferase domain in the interval 28 to 159 (TTVGTITPES…NAGVEMQIRK (132 aa)). Residues 100–102 (IAV) and 108–113 (GQGLGK) each bind acetyl-CoA. D-glucosamine 6-phosphate-binding positions include 129–130 (YK) and aspartate 134. 143–145 (YEK) contributes to the acetyl-CoA binding site. Position 158 (arginine 158) interacts with D-glucosamine 6-phosphate.

The protein belongs to the acetyltransferase family. GNA1 subfamily. In terms of assembly, homodimer.

It catalyses the reaction D-glucosamine 6-phosphate + acetyl-CoA = N-acetyl-D-glucosamine 6-phosphate + CoA + H(+). It functions in the pathway nucleotide-sugar biosynthesis; UDP-N-acetyl-alpha-D-glucosamine biosynthesis; N-acetyl-alpha-D-glucosamine 1-phosphate from alpha-D-glucosamine 6-phosphate (route I): step 1/2. This chain is Glucosamine 6-phosphate N-acetyltransferase (GNA1), found in Saccharomyces cerevisiae (strain ATCC 204508 / S288c) (Baker's yeast).